The sequence spans 426 residues: Adenylosuccinate synthetase (426 aa).

GTP-binding positions include Gly12–Lys18 and Gly40–Thr42. Catalysis depends on Asp13, which acts as the Proton acceptor. Mg(2+) contacts are provided by Asp13 and Gly40. Residues Asp13–Lys16, Asn38–His41, Thr125, Arg139, Gln221, Thr236, and Arg300 each bind IMP. His41 (proton donor) is an active-site residue. A substrate-binding site is contributed by Thr296–Arg302. GTP contacts are provided by residues Arg302, Lys328–Asp330, and Ala410–Gly412.

This sequence belongs to the adenylosuccinate synthetase family. In terms of assembly, homodimer. The cofactor is Mg(2+).

Its subcellular location is the cytoplasm. The enzyme catalyses IMP + L-aspartate + GTP = N(6)-(1,2-dicarboxyethyl)-AMP + GDP + phosphate + 2 H(+). The protein operates within purine metabolism; AMP biosynthesis via de novo pathway; AMP from IMP: step 1/2. In terms of biological role, plays an important role in the de novo pathway of purine nucleotide biosynthesis. Catalyzes the first committed step in the biosynthesis of AMP from IMP. The polypeptide is Adenylosuccinate synthetase (Syntrophomonas wolfei subsp. wolfei (strain DSM 2245B / Goettingen)).